Reading from the N-terminus, the 127-residue chain is Small ribosomal subunit protein uS11 (127 aa).

Belongs to the universal ribosomal protein uS11 family. Part of the 30S ribosomal subunit. Interacts with proteins S7 and S18. Binds to IF-3.

Functionally, located on the platform of the 30S subunit, it bridges several disparate RNA helices of the 16S rRNA. Forms part of the Shine-Dalgarno cleft in the 70S ribosome. The chain is Small ribosomal subunit protein uS11 from Streptococcus suis (strain 98HAH33).